The sequence spans 209 residues: Holliday junction branch migration complex subunit RuvA (209 aa).

Positions 1–70 are domain I; that stretch reads MFSYLKGEAI…EDGTYLYGFA (70 aa). The segment at 71–149 is domain II; the sequence is SAAARDLFRQ…QWRDQFSLPD (79 aa). The tract at residues 149 to 153 is flexible linker; it reads DTAAQ. The interval 154–209 is domain III; sequence PNAAVHEDLELTLLALGYQETEIRGAIATLSQDSILLQNDNADEWIRRAITLLSQT.

Belongs to the RuvA family. As to quaternary structure, homotetramer. Forms an RuvA(8)-RuvB(12)-Holliday junction (HJ) complex. HJ DNA is sandwiched between 2 RuvA tetramers; dsDNA enters through RuvA and exits via RuvB. An RuvB hexamer assembles on each DNA strand where it exits the tetramer. Each RuvB hexamer is contacted by two RuvA subunits (via domain III) on 2 adjacent RuvB subunits; this complex drives branch migration. In the full resolvosome a probable DNA-RuvA(4)-RuvB(12)-RuvC(2) complex forms which resolves the HJ.

It is found in the cytoplasm. Functionally, the RuvA-RuvB-RuvC complex processes Holliday junction (HJ) DNA during genetic recombination and DNA repair, while the RuvA-RuvB complex plays an important role in the rescue of blocked DNA replication forks via replication fork reversal (RFR). RuvA specifically binds to HJ cruciform DNA, conferring on it an open structure. The RuvB hexamer acts as an ATP-dependent pump, pulling dsDNA into and through the RuvAB complex. HJ branch migration allows RuvC to scan DNA until it finds its consensus sequence, where it cleaves and resolves the cruciform DNA. The polypeptide is Holliday junction branch migration complex subunit RuvA (Picosynechococcus sp. (strain ATCC 27264 / PCC 7002 / PR-6) (Agmenellum quadruplicatum)).